A 112-amino-acid polypeptide reads, in one-letter code: MSQADISTCSAPQRVFQEAVKKGNTKELHSLLQNMTNCEFNVNSFGPEGQTALHQSVIDGNLELVKLLVKFGADIRLANREGWSALHIAAFGGHQDIVLYLITKAKYSSGAR.

2 ANK repeats span residues 48–77 and 81–110; these read EGQTALHQSVIDGNLELVKLLVKFGADIRL and EGWSALHIAAFGGHQDIVLYLITKAKYSSG.

It belongs to the NRARP family.

Functionally, regulates independently canonical Wnt and Notch signaling by modulating LEF1 and Notch protein turnover. Stabilizes LEF1, a pivotal transcription factor in the Wnt signaling cascade, by blocking its ubiquitination. Involved in angiogenesis; involved in intersegmental vessel patterning during development. The sequence is that of Notch-regulated ankyrin repeat-containing protein A (nrarpa) from Danio rerio (Zebrafish).